A 159-amino-acid polypeptide reads, in one-letter code: 17 kDa surface antigen (159 aa).

The signal sequence occupies residues 1 to 19 (MKLLSKIMIIALATSMLQA). Residue cysteine 20 is the site of N-palmitoyl cysteine attachment. The S-diacylglycerol cysteine moiety is linked to residue cysteine 20.

Belongs to the rickettsiale 17 kDa surface antigen family.

Its subcellular location is the cell outer membrane. This chain is 17 kDa surface antigen (omp), found in Rickettsia japonica (strain ATCC VR-1363 / YH).